The primary structure comprises 366 residues: Class I histocompatibility antigen, Gogo-C*0203 alpha chain (366 aa).

An N-terminal signal peptide occupies residues 1-24; sequence MRVMAPRTLILLLSGALALTETWA. The segment at 25–114 is alpha-1; it reads GSHSMRYFYT…LRGYYNQSED (90 aa). Residues 25–308 are Extracellular-facing; it reads GSHSMRYFYT…EPSSQPTIPI (284 aa). Asn110 carries an N-linked (GlcNAc...) asparagine glycan. An alpha-2 region spans residues 115 to 206; it reads GSHTLQSMYG…ENGKETLQRA (92 aa). 2 disulfides stabilise this stretch: Cys125–Cys188 and Cys227–Cys283. Positions 207 to 298 are alpha-3; sequence EPPKTHVTHH…GLPEPLTLRW (92 aa). The region spanning 209 to 297 is the Ig-like C1-type domain; sequence PKTHVTHHPL…EGLPEPLTLR (89 aa). Residues 299–308 form a connecting peptide region; sequence EPSSQPTIPI. The helical transmembrane segment at 309–332 threads the bilayer; the sequence is VGIVVGLAVLVVLAVLGAVVTAMM. The Cytoplasmic portion of the chain corresponds to 333–366; sequence CRRKSSGGKGGSCSQAACSNSAQGSDESLITCKA.

It belongs to the MHC class I family. As to quaternary structure, heterodimer of an alpha chain and a beta chain (beta-2-microglobulin).

It is found in the membrane. Involved in the presentation of foreign antigens to the immune system. This is Class I histocompatibility antigen, Gogo-C*0203 alpha chain from Gorilla gorilla gorilla (Western lowland gorilla).